Here is a 183-residue protein sequence, read N- to C-terminus: Large ribosomal subunit protein uL6 (183 aa).

This sequence belongs to the universal ribosomal protein uL6 family. In terms of assembly, part of the 50S ribosomal subunit.

Its function is as follows. This protein binds to the 23S rRNA, and is important in its secondary structure. It is located near the subunit interface in the base of the L7/L12 stalk, and near the tRNA binding site of the peptidyltransferase center. The polypeptide is Large ribosomal subunit protein uL6 (Mycoplasmoides gallisepticum (strain R(low / passage 15 / clone 2)) (Mycoplasma gallisepticum)).